A 230-amino-acid chain; its full sequence is Mediator of RNA polymerase II transcription subunit 7 (230 aa).

2 disordered regions span residues 1-22 (MSREESVSGANDVSSLYPPPPP) and 206-230 (QSQSQSQSQSQSQSQSQSQLQSDSQ).

This sequence belongs to the Mediator complex subunit 7 family. Component of the Mediator complex.

It localises to the nucleus. In terms of biological role, component of the Mediator complex, a coactivator involved in the regulated transcription of nearly all RNA polymerase II-dependent genes. Mediator functions as a bridge to convey information from gene-specific regulatory proteins to the basal RNA polymerase II transcription machinery. Mediator is recruited to promoters by direct interactions with regulatory proteins and serves as a scaffold for the assembly of a functional preinitiation complex with RNA polymerase II and the general transcription factors. This chain is Mediator of RNA polymerase II transcription subunit 7 (MED7), found in Candida glabrata (strain ATCC 2001 / BCRC 20586 / JCM 3761 / NBRC 0622 / NRRL Y-65 / CBS 138) (Yeast).